Here is a 919-residue protein sequence, read N- to C-terminus: UPF0182 protein SUN_1015 (919 aa).

The next 7 helical transmembrane spans lie at 8–28, 51–71, 102–122, 158–178, 207–227, 246–266, and 274–294; these read IIIT…VDYY, ILSF…HIHF, AVAW…GSYA, VYQF…IGVL, LTAF…YNIL, IPAY…LFFY, and VIVS…WIYP.

Belongs to the UPF0182 family.

The protein resides in the cell membrane. The chain is UPF0182 protein SUN_1015 from Sulfurovum sp. (strain NBC37-1).